A 395-amino-acid polypeptide reads, in one-letter code: Acetyl-CoA acetyltransferase (395 aa).

Cys90 (acyl-thioester intermediate) is an active-site residue. Residues Tyr185 and Lys230 each contribute to the CoA site. Position 185 (Tyr185) interacts with K(+). 3 residues coordinate K(+): Ala246, Ala247, and Ala249. A CoA-binding site is contributed by Ser250. Val347 lines the K(+) pocket. Catalysis depends on proton acceptor residues His351 and Cys381.

Belongs to the thiolase-like superfamily. Thiolase family. Homotetramer.

The protein localises to the cytoplasm. It catalyses the reaction 2 acetyl-CoA = acetoacetyl-CoA + CoA. The protein operates within metabolic intermediate biosynthesis; (R)-mevalonate biosynthesis; (R)-mevalonate from acetyl-CoA: step 1/3. Acetyl-CoA acetyltransferase; part of the first module of ergosterol biosynthesis pathway that includes the early steps of the pathway, conserved across all eukaryotes, and which results in the formation of mevalonate from acetyl-coenzyme A (acetyl-CoA). Erg10 catalyzes the formation of acetoacetyl-CoA from acetyl-CoA. The first module starts with the action of the cytosolic acetyl-CoA acetyltransferase eg10 that catalyzes the formation of acetoacetyl-CoA. The hydroxymethylglutaryl-CoA synthases erg13 then condenses acetyl-CoA with acetoacetyl-CoA to form HMG-CoA. The rate-limiting step of the early module is the reduction to mevalonate by the 3-hydroxy-3-methylglutaryl-coenzyme A (HMG-CoA) reductases hcs1. The sequence is that of Acetyl-CoA acetyltransferase (erg10) from Schizosaccharomyces pombe (strain 972 / ATCC 24843) (Fission yeast).